The following is a 368-amino-acid chain: Peptide chain release factor 2 (368 aa).

N5-methylglutamine is present on Gln250.

It belongs to the prokaryotic/mitochondrial release factor family. In terms of processing, methylated by PrmC. Methylation increases the termination efficiency of RF2.

The protein localises to the cytoplasm. Peptide chain release factor 2 directs the termination of translation in response to the peptide chain termination codons UGA and UAA. The polypeptide is Peptide chain release factor 2 (Mycolicibacterium smegmatis (strain ATCC 700084 / mc(2)155) (Mycobacterium smegmatis)).